The sequence spans 533 residues: D-3-phosphoglycerate dehydrogenase (533 aa).

An N-acetylalanine modification is found at Ala2. Ser14 is subject to Phosphoserine. N6-acetyllysine; alternate is present on Lys21. Lys21 participates in a covalent cross-link: Glycyl lysine isopeptide (Lys-Gly) (interchain with G-Cter in SUMO1); alternate. Lys21 participates in a covalent cross-link: Glycyl lysine isopeptide (Lys-Gly) (interchain with G-Cter in SUMO2); alternate. Lys58 is modified (N6-acetyllysine). Residues Thr78, 155 to 156, Asp175, Thr207, 234 to 236, and Asp260 each bind NAD(+); these read RI and CAR. The residue at position 78 (Thr78) is a Phosphothreonine. Arg236 is an active-site residue. Glu265 is a catalytic residue. His283 serves as the catalytic Proton donor. 283-286 lines the NAD(+) pocket; that stretch reads HLGA.

The protein belongs to the D-isomer specific 2-hydroxyacid dehydrogenase family. Homotetramer.

It carries out the reaction (2R)-3-phosphoglycerate + NAD(+) = 3-phosphooxypyruvate + NADH + H(+). The catalysed reaction is (R)-2-hydroxyglutarate + NAD(+) = 2-oxoglutarate + NADH + H(+). It catalyses the reaction (S)-malate + NAD(+) = oxaloacetate + NADH + H(+). Its pathway is amino-acid biosynthesis; L-serine biosynthesis; L-serine from 3-phospho-D-glycerate: step 1/3. Catalyzes the reversible oxidation of 3-phospho-D-glycerate to 3-phosphonooxypyruvate, the first step of the phosphorylated L-serine biosynthesis pathway. Also catalyzes the reversible oxidation of 2-hydroxyglutarate to 2-oxoglutarate and the reversible oxidation of (S)-malate to oxaloacetate. The polypeptide is D-3-phosphoglycerate dehydrogenase (PHGDH) (Pan troglodytes (Chimpanzee)).